We begin with the raw amino-acid sequence, 301 residues long: Probable aspartoacylase (301 aa).

Zn(2+) contacts are provided by H13 and E16. Substrate-binding positions include R54 and 61 to 62 (NR). Residue H105 coordinates Zn(2+). Substrate-binding residues include E163 and Y273.

Belongs to the AspA/AstE family. Aspartoacylase subfamily. Requires Zn(2+) as cofactor.

It carries out the reaction an N-acyl-L-aspartate + H2O = a carboxylate + L-aspartate. The polypeptide is Probable aspartoacylase (Prochlorococcus marinus (strain MIT 9301)).